Reading from the N-terminus, the 274-residue chain is E3 ubiquitin-protein ligase complex SLX5-SLX8 subunit SLX8 (274 aa).

2 disordered regions span residues 1-117 (MARR…GNNI) and 136-159 (ANTPSASPMLDAAPPTTKPGTNSK). The span at 13–28 (ENLRIKRVRLESVRQN) shows a compositional bias: basic and acidic residues. A Phosphoserine modification is found at S50. T66 carries the post-translational modification Phosphothreonine. Positions 66–75 (TSEEDGDDDL) are enriched in acidic residues. Residue S67 is modified to Phosphoserine. Over residues 97-108 (GNHDRETMHTEE) the composition is skewed to basic and acidic residues. The segment at 206–250 (CPICFEPPETALMTLCGHVFCCPCLFQMVNSSRTCRQFGHCALCR) adopts an RING-type zinc-finger fold.

In terms of assembly, component of the heterodimeric SUMO-targeted ubiquitin ligase (STUbL) complex composed of SLX5 and SLX8.

It is found in the nucleus. It localises to the chromosome. The protein resides in the centromere. The protein localises to the kinetochore. It catalyses the reaction S-ubiquitinyl-[E2 ubiquitin-conjugating enzyme]-L-cysteine + [acceptor protein]-L-lysine = [E2 ubiquitin-conjugating enzyme]-L-cysteine + N(6)-ubiquitinyl-[acceptor protein]-L-lysine.. It participates in protein modification; protein ubiquitination. Functionally, component of the SUMO-targeted ubiquitin ligase (STUbL) complex SLX5/SLX8 that mediates ubiquitination and subsequent desumoylation of sumoylated proteins and proteins containing SUMO-like domains for their degradation. The STUbL complex SLX5/SLX8 stimulates ubiquitin conjugating enzymes, including UBC1, UBC4, UBC5 and UBC13-MMS2, and mediates the proteolytic down-regulation of sumoylated proteins. The STUbL complex SLX5/SLX8 is involved in ubiquitin-mediated degradation of histone variant CSE4, preventing mislocalization to euchromatin. The complex plays an essential role in maintenance of chromosome stability and links SUMO-dependent ubiquitination to a centromere-specific function during mitosis. The complex is involved in proteolysis of spindle positioning protein KAR9 and ensures correct spindle function by regulating levels of microtubule-associated proteins. During replication, the complex helps to prevent DNA lesions via recombination and has a role in localizing the DNA damage protein DCD2. The complex especially ubiquitinates the nuclease YEN1 and prevents persistent accumulation of a fraction of YEN1 associated with sites of activity in late G2/M and helps maintain the balance between pro- and anti-crossover pathways during homologous recombination. It is also involved in ubiquitin-mediated degradation of DNA repair proteins RAD52 and RAD57. Finally, the complex is recruited to distinct genomic hotspots of non-H2B protein ubiquitination (ub-hotspots) by the sumoylated transcription factor-like protein EUC1 where it ubiquitinates EUC1 and presumably other targets. This is E3 ubiquitin-protein ligase complex SLX5-SLX8 subunit SLX8 (SLX8) from Saccharomyces cerevisiae (strain ATCC 204508 / S288c) (Baker's yeast).